Here is a 473-residue protein sequence, read N- to C-terminus: Aspartyl aminopeptidase 1 (473 aa).

H93 contributes to the Zn(2+) binding site. H168 contributes to the substrate binding site. Residues D262, E298, E299, and D343 each coordinate Zn(2+). E298 provides a ligand contact to substrate. The substrate site is built by D343, H346, K371, and Y378. H437 contacts Zn(2+).

It belongs to the peptidase M18 family. In terms of assembly, tetrahedron-shaped homododecamer built from six homodimers. Interacts with autophagy receptor Nbr1. Zn(2+) serves as cofactor.

It localises to the cytoplasm. It is found in the vacuole lumen. The catalysed reaction is Release of an N-terminal aspartate or glutamate from a peptide, with a preference for aspartate.. In terms of biological role, aspartyl aminopeptidase that is able to remove aspartyl residue at N-terminus of angiotensin I. Also acts as a chaperone and efficiently suppressed the thermal aggregation of citrate synthase. This is Aspartyl aminopeptidase 1 (ape4) from Schizosaccharomyces pombe (strain 972 / ATCC 24843) (Fission yeast).